An 88-amino-acid chain; its full sequence is Insulin-related peptide 4 (88 aa).

The first 19 residues, 1-19, serve as a signal peptide directing secretion; it reads MKLTLIILLVVAYSWCSEA. The propeptide occupies 20–45; it reads QNEARVFCGRVLSERLAALCWGPNSV. Position 65 is an arginine amide (R65). A propeptide spanning residues 69–88 is cleaved from the precursor; sequence GLATECCDKACTVEELLSYC.

Belongs to the insulin family. DAGWWLTRGAARSLGGVR-amide: Expressed in corpora cardiaca (CC), corpora allata (CA), antennal lobe (AL) and gnathal ganglion (GNG) (at protein level). Expression in CC and CA detected in most animals, in AL and GNG in few animals (at protein level).

It is found in the secreted. The sequence is that of Insulin-related peptide 4 from Agrotis ipsilon (Black cutworm moth).